Here is a 366-residue protein sequence, read N- to C-terminus: Ribosomal RNA large subunit methyltransferase M (366 aa).

S-adenosyl-L-methionine contacts are provided by residues S188, 221–224, D240, D260, and D277; that span reads CPGG. K306 serves as the catalytic Proton acceptor.

The protein belongs to the class I-like SAM-binding methyltransferase superfamily. RNA methyltransferase RlmE family. RlmM subfamily. In terms of assembly, monomer.

Its subcellular location is the cytoplasm. The catalysed reaction is cytidine(2498) in 23S rRNA + S-adenosyl-L-methionine = 2'-O-methylcytidine(2498) in 23S rRNA + S-adenosyl-L-homocysteine + H(+). Catalyzes the 2'-O-methylation at nucleotide C2498 in 23S rRNA. The protein is Ribosomal RNA large subunit methyltransferase M of Salmonella arizonae (strain ATCC BAA-731 / CDC346-86 / RSK2980).